We begin with the raw amino-acid sequence, 270 residues long: 2-heptyl-3-hydroxy-4-quinolone dioxygenase AqdC2 (270 aa).

Positions 25–156 constitute an AB hydrolase-1 domain; sequence PALVLLTGWG…KSARAGLAKS (132 aa). His-99 serves as a coordination point for substrate. His-248 serves as the catalytic Proton donor/acceptor.

It belongs to the AB hydrolase superfamily.

The enzyme catalyses 2-heptyl-3-hydroxy-4(1H)-quinolone + O2 = N-octanoylanthranilate + CO + H(+). Involved in the degradation of the Pseudomonas aeruginosa quorum sensing signal molecules HHQ (2-heptyl-4-quinolone) and PQS (2-heptyl-3-hydroxy-4-quinolone) to anthranilic acid. Catalyzes the cleavage of PQS to form N-octanoylanthranilic acid and carbon monoxide. The polypeptide is 2-heptyl-3-hydroxy-4-quinolone dioxygenase AqdC2 (Rhodococcus erythropolis (Arthrobacter picolinophilus)).